We begin with the raw amino-acid sequence, 449 residues long: UDP-N-acetylmuramoylalanine--D-glutamate ligase (449 aa).

118-124 lines the ATP pocket; the sequence is GSNGKTT.

This sequence belongs to the MurCDEF family.

It localises to the cytoplasm. It catalyses the reaction UDP-N-acetyl-alpha-D-muramoyl-L-alanine + D-glutamate + ATP = UDP-N-acetyl-alpha-D-muramoyl-L-alanyl-D-glutamate + ADP + phosphate + H(+). Its pathway is cell wall biogenesis; peptidoglycan biosynthesis. Its function is as follows. Cell wall formation. Catalyzes the addition of glutamate to the nucleotide precursor UDP-N-acetylmuramoyl-L-alanine (UMA). This is UDP-N-acetylmuramoylalanine--D-glutamate ligase from Leuconostoc mesenteroides subsp. mesenteroides (strain ATCC 8293 / DSM 20343 / BCRC 11652 / CCM 1803 / JCM 6124 / NCDO 523 / NBRC 100496 / NCIMB 8023 / NCTC 12954 / NRRL B-1118 / 37Y).